A 114-amino-acid polypeptide reads, in one-letter code: uncharacterized protein (114 aa).

The N-myristoyl glycine; by host moiety is linked to residue Gly2. 2 consecutive transmembrane segments (helical) span residues 11–31 and 44–64; these read FGLI…KDLL and GLMW…LVAI. The disordered stretch occupies residues 73-114; the sequence is VNKDSKDPKDKSIEFDDSPIRDGSSGTPDNSNEPTDLSVETS. Residues 75 to 92 show a composition bias toward basic and acidic residues; that stretch reads KDSKDPKDKSIEFDDSPI. Polar residues predominate over residues 96–114; it reads SSGTPDNSNEPTDLSVETS.

The protein localises to the membrane. This is an uncharacterized protein from Acanthamoeba polyphaga (Amoeba).